Reading from the N-terminus, the 5099-residue chain is MGRFSCIFPSLTDGYIPDPAHCRAAGRRVYEIDLGGWGPLPDRPDAHLVAAWALILSSYVGTDEVAFYVVPARGPDATALCELKVNGSLPRRSLTDDAWQLLHPLPLGPGQVSSETANTIITFAEDIDPLFITQAEEAFLTLHVRNTSPGNVALHLGYHLSLFTDAQAANVGTAMAQVLTSLAGDPDELVRDVDHMSRTHLDQIWHFNANVPSTWQECFHDVVQRHAADRPHSLAIDAWDGRLTYAELVGKATPLARHMQERGVRPGVVVPISFERSAGALIAMLAVSKAGGAFVSVPTSLPPGRLDAILEVIEAPFVLTRSTHQSFWAGRLPALIIDNYPKPASTAVVETLAKADDLFYVIFTSGSTGRPKGCMLSHSNWLNGALRNAPNWKYGPNSRVLQMLNHTFDMSLLEICTSLGSGACVCIPPADEVEAGLAGAINRWQVNHVIMTPSLARALRPGDVPGLRTMCLGGEAFPREIVTMWSECIHLFQFYGPSECSINSSTRAITGVDADPLNIGPPNSAACWVSDIQDHNKLVPIGAIGELLVSGPIVGMGYLRNPVKTAEAFIDHVGFIPMDDPKFAGFRLYKTGDLVRWNSDGTLTFCGRADTQVKLNGQRLELAEVEYQLGLEADVQLAIALVPQVGRCKNNLIAILTVRGAATSSRGVTAGEIPLLNRQDPIVQQAVKRLRAQLQQALPRYMVPTIWAFVGHMPMSASGKIDRVRVRGWVEEMSQETFDAITGRSFEADDHLLGLTHLENEIQLAWAEALGLSAAEVGLHQPFVALGGDSIKALDAVGRCRARQVDITMVSTLSCEGVREAASLAKVRDSPTQRVVEMAVDYSDLWDCLSSDYDLAKLGIGNADEVEDVFPCTSMQEGMFLGQIRRPGAYHMRFFHRVQLKGGGLPTVERIQTAWSSLVARHPSLRTIFVDDLSPEAIYHSVVLRNVPVDTTTREVPRDLSPEDALSMFTQELVPFRPNAPLHRLRLFTCRGRVSYFMLEISHVIMDGYALSVFRREFIQACSTPASVPRGPDYRMFANYHRTRQTADSAAYWTAYLKDAAPCHIPTYDQAMAADGLDYPRTLLRRDFSYQTSGTFLQRCKERQVTLACAIRATWALVLRAYTQSQDVCFGYVSSGRNVPVPDVETIFGLCLSMQVCRARVGESRTLVDLARRIQEDYVESLPYQHYPLAEVQRGLKQTRRQALFNTAISMEWVPPAGDDEDALIDLEEIREQDDPTEYDIAISVDVHAGCIKLGFLYWPTLTEFEITHLAQAMQGAMDCFALQPDGPVDSLTLLKPGDLSSALVGWPDLLPLEAVRGNVMSMIDRWVNRQPDTLAIDGWDESLTYHQLQQQSSWVARNLLHRGVHQGDRILVCMDRSSRTVVTILGIVRSGAVLVLSNPADPAKRLQWLTQKCNAAMIVADPQYRDRFEAPGNPSVTVVDAPSVCTPAAWDYLFPVLDGQDPVSILFTSGSTGTPKGIVMHHGSLATSVLLGHGRTLRFSRQTRMLHFASLTFDAALAEIFTTLAHGGCMCIPSEDDRLSDVPGCIARFKVNTAMLTPSVGRILDPAALPTLRTLVLVGEPMSRLDVERFAPALDLYNGAGPTETSIMVTIAGPMQPTDDPLNLGHAVAGVRLWVTETEAPNRLAPLGAVGELVVEGSLVTQGYLDDPVRTQEAFLSKLAWLPSHNPLYRTGDLVRYVADGSFRYMGRKDTQVKLRGQRIELQEVEYHLRCSWPHAQVVVEMVIPDGRTRSQAALVAFVSGLTPEDAHFLFNGALISAEAPGIAQAVLSEKTTQALSEALPRHMVPSIYLALETIPLSVNGKADRRRLRDLGASWLASSAFHPGPECLQTPTAEWARAPELERTLVELWATTLSIEPGAIRGDDSFFELGGDSVSAMKLVATARDKYKLSLSVPQVFRYPTIRQIATQCEGIAVQLASSASSTTEEGFTFSTPDESSTNEGLDGEFWQLASAQLADLAREKGKTLDVAAILKRMQQESSSSPAPSVSSSSSSSSAPKPLLAQPEPPTNLRDSVPEPFSLIGGGPSAVEQICQQAMEQCQIPRESIEDIYPATPLQEGMMALMAKTPGVYTTTLRCELSNQVDCARLQSAWDQASEAHPILRTRIVLTNDHRAMQVVQHGNRLPWDVYSLRDSDNLPDLTSQMTLGSPLLRLAEIRQAGGQGRLLLVTIHHALYDGWSFPLVKQAVEDAYSGQALKSQAFTPFIAYLNEGRLAAEQFWADHLESFAGGAFPCLPTVDHRIRPTARLTRKLSLPVSAGHQYTLATKIQAAWAVTVSRYDDETDVVFGTVSTGRAAPVPGIDRVAGPTITTIPVRVSLQDRAQRVGPFLQKVQEDGWRSLDHEHLGLQHIRRLGDSAAAACRLQTLLVLQPRQQPPAEPSSAILAGLQDMAELEGLDTYPLMLVCEPDGADVHLIAIFDPVVLHEAILARMVTHWEHVLTQLWTEPDIAVVDLEALSPGDKKVLMRWNGASQLPDGCVHESVHQWRLSTPHAPAVCAWDGDWTYEELDNLSSALAHHLTLHGVSHGTSVALYHEKSRWAAVGLLAVFKAGGILVTLDPAHPVDRLREILGQVQARVILSSQEHEATAKALGTLVLTVEEVATQPEPELFRPVGPITSSQCAFTPFTSGSTGRPKGIPLEHRGMVATIASMAERCLLTTTSRVLQFASFAFDASVMEHLLAWYAGGCLCVPSEFDRQANLGEVIRDLRVNWAFLTPSCLRLITPDDVPCLEGMGLGGEPVLPEHITTWAPRLRQLVQMYGPAECSFVTVLTEVTQASENRLIGSPSACRCWVIDPMDPDRLMPLGAIGELVIEGLAVGRGYINEPQRTAEAFIAPPPWLQTLYPDDGQPRRLYRTGDLVRYAGDDGRLTFVGRKDGQLKLHGQRIELGDVETHLRPLIPATQGIAVEMIVCADDQNPLLAAFIEVSQDATALQRNTHLVHPGRVQSAVDIKAIESTLARTVPHYMVPSIYLHISKLPLNPSGKLNRRQLREMVGALPRQSLNEYAIKCHSSTTNRPATAQERGLQTIWATVLALDRDAIGVHDDFFRMGGDSIAGMQVATKCNAAGMRISSADLFRHRTIARLVLHLQNTSQESSAMITLPEEKFDEWVHLAPIQQLFFENAPDGPNHFNQSLLLRTGRQVDAQELAAGLDILVQRHSMLRARFRRTDSGRWTQQVMSLGPSPSSFYRLFTHGKASPETLPGIFTASQSAIDIQKGPLLSVDLVDLTDGSQLVYFVAHHLVIDLVSWRILHAELEDYLRTGSLAAMAESTPFLTWCRAQAEYSAKELSPAQSLPGYQSAANHFDPEGYWGISMESNTFTQVASYRFTLDGDTTETLFGVANDALGTQPVEIMLAALWYSFTQTLTGRPEPSIYVEGHGREPWTDTIDLSGTVGWFTTMSPLVSSPWSNLSQASMRDFADALRYIKDQRRRVPANGWAYFASRYLNDEGRVVYGRTNPAVEILFNYMGQYQQLTREDAILQLVGDDIQAGTGAADIAGDVRRFALIDVSAFTAHGCLSFDFSFPESIQHRDRLQHWFEQCRQTLIVAASILSLQTPQKTLTDFPLLPSLTYDQLSQCLDHTLPAVGLFPSDIVDIYPCSPVQRGMLLAQLRNPQFYQQRFRFRVLPDTRTEAIGLVGLQQVRDAWIEVINRHDILRTIFLPVSDQGYVDQVLLKPGSLHHLVRIGAGEPDTAIDPGTPHWVNISHDPTGTVVCDWNVSHALVDAVSVAIIQREVSQALQGHLSTPPPQQYGNYIQWLSAQNMQETQDYWKKYLQAVEPCLFPRLAAHSDRLTSPVGIQATRATVDREVRIDQLCHQHGITLTNVFHLVWALVLRTYVGTNNVCFGYATQGRDVPVAGVEEMVGPVVNVLATTLRLQDSESVLDALQTHQTHLADNLAHQNHALVDIYATHGVAGSQLFNTIVSLQDLSHHETADTQSLRLEVMPAHDSSEYDIALNVGVNKTSIELVCSYQTWSLSAEHADALLRTAARVLDEILQTPLKTIGEVDVVSLTCKQQAMRWNATLPATVHEYVHEQIQAQCRLYANREAVCAWDGHFTFAEIDDLSSRLAGNLISLGAQPGRIVPIYSPKSRWVVIAILGVLKAGAAFTLLDASHPVARLQEICQGVNADLIISLASHASVAAQLAAAIVILDNAPSMSSDEIIMCTRRQSLSTESLAYVIFTSGSTGKPKGVMVSHSNLCTSAMAQTVALNLTTESRVLQFASYAFDACILEVIGALFAGACVCIPSETDSKDDLVGSIERMRVTWALLTPSVARILNQETLPTLETLVLGGEPITLSDLEPWRSRLQLVCAYGPSECTIVSTTTALSTFPNRSKNIGQRGACATWVVDPQDYQKLVPFGATGELLIEGPIVGQGYLGDAVRTAECFPPPPRWLSQLRQAPTRVYRTGDLVRYESDGTIRFVGRKDSQIKFHGQRIELGDIEHHAQDAFRDAQTVIIDLITPGELHKAYLAAFVLQKDTDAHLDKVDDDCILLSPSDRFRSRSLAAQEQMHEELPHYMVPAIFLPLSRVPLAKTGKTDRQYLRQCALALQGHDLEAYRAASSTKRPPSTGMQQGIQALVATVLGKDTTEVGMDDSFFHLGGDSVQAMRLVSVGRQQGLAVSVLSIFDHPRLADLAEHISSRVKDRNSVRLPSSSLLPSISEAGQLDRLVEGHPFEKDDVVDILPTTGFQRYWLDMQLSSYVIIDIPGQVDWAQLTKALQRVIENCPILRTAFVPYRGSTVQVILKTIVSLIEVDLTGDLTSAVEEWCRQDAKTPVSPGTSYMHTVRASQGATQHKLIMRLSHAQYDAVALSLVLNHLSCTYADQLPLPDAPAFSDYLTYQRTRNKERASSDFWGQLLKGASITNLGPQGSRDDKEATIARSRHISVGPLPRGITMATVVKAAWSLILARRTGMCDVLFGQVVHGRNTSFPGIERVVGPCTNITPVRASIAPQWTGLDLLQALQDQHRESMAWETVDLDDVLSYCANWTPGSALQTVVQHQNVVLEDLGLRLGDVPSTVSVRAFDHAPREVWLYSSTDDSHPDRLSLRIFSSSWTLDDTIAEELLGLVAEEIVELLRNPEQVLCV.

The interval 224 to 615 is adenylation 1; that stretch reads QRHAADRPHS…CGRADTQVKL (392 aa). The region spanning 756 to 829 is the Carrier 1 domain; that stretch reads THLENEIQLA…EAASLAKVRD (74 aa). At serine 790 the chain carries O-(pantetheine 4'-phosphoryl)serine. The interval 867 to 1297 is condensation 1; it reads EDVFPCTSMQ…PVDSLTLLKP (431 aa). The adenylation 2 stretch occupies residues 1325 to 1717; the sequence is DRWVNRQPDT…GRKDTQVKLR (393 aa). Residues 1857-1934 enclose the Carrier 2 domain; sequence ARAPELERTL…QIATQCEGIA (78 aa). Serine 1894 is modified (O-(pantetheine 4'-phosphoryl)serine). Positions 1995–2040 are disordered; it reads MQQESSSSPAPSVSSSSSSSSAPKPLLAQPEPPTNLRDSVPEPFSL. A compositionally biased stretch (low complexity) spans 1999-2017; the sequence is SSSSPAPSVSSSSSSSSAP. The segment at 2067–2482 is condensation 2; it reads EDIYPATPLQ…ALSPGDKKVL (416 aa). Positions 2505-2897 are adenylation 3; sequence LSTPHAPAVC…VGRKDGQLKL (393 aa). Residues 3032-3108 enclose the Carrier 3 domain; sequence RPATAQERGL…RLVLHLQNTS (77 aa). O-(pantetheine 4'-phosphoryl)serine is present on serine 3069. 2 condensation regions span residues 3125-3589 and 3610-4033; these read WVHL…TYDQ and DIYP…QQAM. Residues 4058-4446 are adenylation 4; the sequence is YANREAVCAW…VGRKDSQIKF (389 aa). Residues 4581–4657 form the Carrier 4 domain; sequence PPSTGMQQGI…DLAEHISSRV (77 aa). Position 4618 is an O-(pantetheine 4'-phosphoryl)serine (serine 4618). A condensation 5 region spans residues 4696–5017; that stretch reads DILPTTGFQR…LQTVVQHQNV (322 aa).

The protein belongs to the NRP synthetase family.

The protein operates within secondary metabolite biosynthesis. Nonribosomal peptide synthetase; part of the gene cluster that mediates the biosynthesis of malformins, cyclic pentapeptides with a disulfide bond between 2 consecutive cysteins, that show potential anti-tumor as well as antimalarial and antitrypanosomal properties. The nonribosomal peptide synthetase mlfA is responsible of the formation of the cyclic pentapeptide. The malformin biosynthesis clusters in malformin-producing fungi also contain enzymes involved in the formation of the disulfide bond between the two consecutive cysteins within malformins, in addition to additional tailoring enzymes such as methyltransferases or oxidoreductases. They are also composed of up to 4 major facilitator superfamily transporters, and transcription factors probably involved in the regulation of the expression of those clusters. This chain is Malformin synthetase mlfA, found in Aspergillus sclerotiicarbonarius (strain CBS 121057 / IBT 28362).